Here is a 448-residue protein sequence, read N- to C-terminus: MSLIVSDRFRIVVGLGKSGMSLVRFLANRGVSFAVADTRENPPELATLRRDYPQVEVRCGELDVDFLCRADELYVSPGLALATPALQQAHARGAKLSGDIELFARYAKAPVIAITGSNAKSTVTTLVGEMAAAAGKRVAVGGNLGTPALDLLSDDVELYVMELSSFQLETTDQLNAEVATVLNISEDHMDRYSGLPAYHLAKHRIFRGARQVVVNRQDALSRPLIGEGLPCWTFGLNKPDFHGFGLREENGEKFLAFQFENLMPVSELKVRGAHNQANALAALALGHAVGLPFDAMLSSLREFTGLEHRCQWLRERNGVDYYNDSKATNVGAALAAIEGLGSDIGGKLVLIAGGDGKGADFSGLRAPVAKYCRAAVLLGRDAELIAQALGDAVPLIRVDTVQAAAERSAELAQRGDAVLLSPACASLDMFKNYEERGRVFAQAVECLS.

Position 116–122 (116–122 (GSNAKST)) interacts with ATP.

The protein belongs to the MurCDEF family.

The protein localises to the cytoplasm. The enzyme catalyses UDP-N-acetyl-alpha-D-muramoyl-L-alanine + D-glutamate + ATP = UDP-N-acetyl-alpha-D-muramoyl-L-alanyl-D-glutamate + ADP + phosphate + H(+). The protein operates within cell wall biogenesis; peptidoglycan biosynthesis. Its function is as follows. Cell wall formation. Catalyzes the addition of glutamate to the nucleotide precursor UDP-N-acetylmuramoyl-L-alanine (UMA). The sequence is that of UDP-N-acetylmuramoylalanine--D-glutamate ligase from Pseudomonas syringae pv. tomato (strain ATCC BAA-871 / DC3000).